The primary structure comprises 93 residues: uncharacterized protein (93 aa).

Residues Asn-26–Val-73 are disordered.

This is an uncharacterized protein from Caenorhabditis elegans.